Reading from the N-terminus, the 489-residue chain is uncharacterized protein (489 aa).

Residues Ile2–Phe84 form the 2Fe-2S ferredoxin-type domain. [2Fe-2S] cluster contacts are provided by Cys48, Cys53, Cys56, and Cys68. 2 4Fe-4S ferredoxin-type domains span residues Lys123–Pro155 and Thr177–Arg205. Cys134, Cys137, Cys140, Cys144, Cys186, Cys189, Cys192, and Cys196 together coordinate [4Fe-4S] cluster.

Belongs to the succinate dehydrogenase/fumarate reductase iron-sulfur protein family.

This is an uncharacterized protein from Methanocaldococcus jannaschii (strain ATCC 43067 / DSM 2661 / JAL-1 / JCM 10045 / NBRC 100440) (Methanococcus jannaschii).